A 275-amino-acid chain; its full sequence is Phosphonates import ATP-binding protein PhnC (275 aa).

Residues 2-246 (LKIENLTKRY…ALTEIYGEEE (245 aa)) enclose the ABC transporter domain. 35 to 42 (GPSGAGKS) contributes to the ATP binding site.

This sequence belongs to the ABC transporter superfamily. Phosphonates importer (TC 3.A.1.9.1) family. As to quaternary structure, the complex is composed of two ATP-binding proteins (PhnC), two transmembrane proteins (PhnE) and a solute-binding protein (PhnD).

It is found in the cell inner membrane. The enzyme catalyses phosphonate(out) + ATP + H2O = phosphonate(in) + ADP + phosphate + H(+). In terms of biological role, part of the ABC transporter complex PhnCDE involved in phosphonates import. Responsible for energy coupling to the transport system. The sequence is that of Phosphonates import ATP-binding protein PhnC from Wolinella succinogenes (strain ATCC 29543 / DSM 1740 / CCUG 13145 / JCM 31913 / LMG 7466 / NCTC 11488 / FDC 602W) (Vibrio succinogenes).